The sequence spans 1601 residues: Ras guanine nucleotide exchange factor glfB (1601 aa).

Disordered stretches follow at residues 43-140, 188-256, 310-461, and 475-630; these read PLLA…KEWD, DLLI…TTTT, SPQR…APDS, and LTTT…VKKG. The span at 45–55 shows a compositional bias: pro residues; it reads LAPPAPPPPPT. Residues 57-69 are compositionally biased toward polar residues; it reads QEINIGSGNSTFI. Residues 70–126 are compositionally biased toward low complexity; sequence SSNNNNSNNNNNNNSNNNNNNNLNNSNNNNNNLNSNNNNNNNNNNNNNNGNNNNNSN. At Ser-197 the chain carries Phosphoserine. Position 201 is a phosphothreonine (Thr-201). Low complexity-rich tracts occupy residues 211 to 256 and 310 to 330; these read QQQQ…TTTT and SPQRVTTTTTTTTPSTGGVVV. Positions 331–359 are enriched in acidic residues; sequence ADEESDSSEEESDSSEEESDEYTDEESET. Polar residues predominate over residues 384–398; it reads PLTSVNSNDNTSSGT. 3 stretches are compositionally biased toward low complexity: residues 435–458, 475–493, and 500–520; these read TAVAASSISATTNVTSAASTTTVA, LTTTTSATSSTTSATTQSI, and SQQRAAQSISTSSVTPAAITK. Residues 521–533 are compositionally biased toward basic and acidic residues; it reads PTKDAKDKKDPAK. Residues 558 to 577 are compositionally biased toward low complexity; that stretch reads VPTGTSPPVSSSTSISSSTG. Residues 578–596 are compositionally biased toward basic and acidic residues; it reads IKKDKVKLSKEEKDRIKKE. One can recognise a Rho-GAP domain in the interval 649–836; it reads VRLTQLVLSN…LIIDNYVFLF (188 aa). The region spanning 851 to 983 is the N-terminal Ras-GEF domain; that stretch reads GKMIISEGSI…TINDFLKLPK (133 aa). In terms of domain architecture, Ras-GEF spans 1021–1255; the sequence is SAMEIAEQCT…ADLSLKCEPP (235 aa). Residues 1262–1601 are N-terminal F-actin-binding domain; that stretch reads YNAPADIVDE…QESVPSTNAE (340 aa). A disordered region spans residues 1443–1474; it reads SNVEKEKLSSSQEQQEQQEQKQQEQQQQQQEP. The segment covering 1465-1474 has biased composition (low complexity); sequence QEQQQQQQEP.

Interacts with gpaB and rapA. Interacts directly with F-actin. In terms of processing, simultaneously phosphorylated at Ser-197 and Thr-201 after cAMP stimulation.

The protein resides in the cytoplasm. Its subcellular location is the cell cortex. It localises to the cytoskeleton. It is found in the cell projection. The protein localises to the filopodium. The protein resides in the lamellipodium. Functionally, gpaB-activated, rapA-specific guanine nucleotide exchange factor, involved in the regulation of the balance between Ras and Rap signaling at the leading edge of chemotaxing cells. Spatially localized activation of Rap and Ras induces F-actin polymerization at the leading edge of chemotaxing cells through the Rac, PI3K, and TORC2 pathways. Also acts as a key regulator of actin-driven membrane protrusions during processes such as phagocytosis and cytokinesis, possibly by modulating rapA signaling pathways. The protein is Ras guanine nucleotide exchange factor glfB of Dictyostelium discoideum (Social amoeba).